A 403-amino-acid polypeptide reads, in one-letter code: L-cysteine:1D-myo-inositol 2-amino-2-deoxy-alpha-D-glucopyranoside ligase (403 aa).

Position 43 (Cys43) interacts with Zn(2+). Residues 43–46, Thr58, and 81–83 contribute to the L-cysteinyl-5'-AMP site; these read CGIT and NTT. The 'HIGH' region signature appears at 45-55; the sequence is ITPYDATHLGH. A 'ERGGDP' region motif is present at residues 183–188; sequence ERGGDP. Position 223 (Trp223) interacts with L-cysteinyl-5'-AMP. A Zn(2+)-binding site is contributed by Cys227. Residue 245-247 coordinates L-cysteinyl-5'-AMP; sequence GSD. His252 lines the Zn(2+) pocket. Val279 provides a ligand contact to L-cysteinyl-5'-AMP. The 'KMSKS' region motif lies at 285–289; that stretch reads KMSKS.

The protein belongs to the class-I aminoacyl-tRNA synthetase family. MshC subfamily. In terms of assembly, monomer. Requires Zn(2+) as cofactor.

It catalyses the reaction 1D-myo-inositol 2-amino-2-deoxy-alpha-D-glucopyranoside + L-cysteine + ATP = 1D-myo-inositol 2-(L-cysteinylamino)-2-deoxy-alpha-D-glucopyranoside + AMP + diphosphate + H(+). Catalyzes the ATP-dependent condensation of GlcN-Ins and L-cysteine to form L-Cys-GlcN-Ins. The sequence is that of L-cysteine:1D-myo-inositol 2-amino-2-deoxy-alpha-D-glucopyranoside ligase from Thermobispora bispora (strain ATCC 19993 / DSM 43833 / CBS 139.67 / JCM 10125 / KCTC 9307 / NBRC 14880 / R51).